The following is a 596-amino-acid chain: Elongation factor 4 (596 aa).

In terms of domain architecture, tr-type G spans lysine 2–glutamate 184. Residues aspartate 14 to threonine 19 and asparagine 131 to aspartate 134 contribute to the GTP site.

The protein belongs to the TRAFAC class translation factor GTPase superfamily. Classic translation factor GTPase family. LepA subfamily.

It is found in the cell inner membrane. It carries out the reaction GTP + H2O = GDP + phosphate + H(+). Required for accurate and efficient protein synthesis under certain stress conditions. May act as a fidelity factor of the translation reaction, by catalyzing a one-codon backward translocation of tRNAs on improperly translocated ribosomes. Back-translocation proceeds from a post-translocation (POST) complex to a pre-translocation (PRE) complex, thus giving elongation factor G a second chance to translocate the tRNAs correctly. Binds to ribosomes in a GTP-dependent manner. In Shewanella sp. (strain W3-18-1), this protein is Elongation factor 4.